We begin with the raw amino-acid sequence, 427 residues long: MADTKAKITLTGDTTIELDVLKGTLGQDVIDIRSLGSKGVFTFDPGFTSTASCESKITFIDGDEGILLHRGFPIDQLATDSNYLEVCYILLYGEKPTQEEYDEFRTTVTRHTMIHEQITRLFHAFRRDSHPMAVMCGITGALAAFYHDSLDVNNPRHREIAAFRLLSKMPTMAAMCYKYSIGQPFVYPRNDLSYAGNFLNMMFSTPCETYEVNPVLERAMDRILILHADHEQNASTSTVRTAGSSGANPFACIAAGIASLWGPAHGGANEAALKMLEEISSVKHIPEFVRRAKDKNDSFRLMGFGHRVYKNYDPRATVMRETCHEVLKELGTKDDLLEVAMELEHIALNDPYFIEKKLYPNVDFYSGIILKAMGIPSSMFTVIFAMARTVGWIAHWNEMHTDGMKIARPRQLYTGYDKRDFKSALKR.

Residues His306 and Asp363 contribute to the active site.

Belongs to the citrate synthase family. Homohexamer.

The catalysed reaction is oxaloacetate + acetyl-CoA + H2O = citrate + CoA + H(+). It functions in the pathway carbohydrate metabolism; tricarboxylic acid cycle; isocitrate from oxaloacetate: step 1/2. Its activity is regulated as follows. Allosterically inhibited by NADH. In Salmonella typhimurium (strain LT2 / SGSC1412 / ATCC 700720), this protein is Citrate synthase (gltA).